Consider the following 316-residue polypeptide: Thymidylate synthase (316 aa).

Residues Arg23 and 178–179 (RR) contribute to the dUMP site. Cys198 acts as the Nucleophile in catalysis. Residues 218–221 (RSAD), Asn229, and 259–261 (HIY) contribute to the dUMP site. Asp221 serves as a coordination point for (6R)-5,10-methylene-5,6,7,8-tetrahydrofolate. Position 315 (Ala315) interacts with (6R)-5,10-methylene-5,6,7,8-tetrahydrofolate.

It belongs to the thymidylate synthase family. Bacterial-type ThyA subfamily. Homodimer.

Its subcellular location is the cytoplasm. It catalyses the reaction dUMP + (6R)-5,10-methylene-5,6,7,8-tetrahydrofolate = 7,8-dihydrofolate + dTMP. It participates in pyrimidine metabolism; dTTP biosynthesis. Functionally, catalyzes the reductive methylation of 2'-deoxyuridine-5'-monophosphate (dUMP) to 2'-deoxythymidine-5'-monophosphate (dTMP) while utilizing 5,10-methylenetetrahydrofolate (mTHF) as the methyl donor and reductant in the reaction, yielding dihydrofolate (DHF) as a by-product. This enzymatic reaction provides an intracellular de novo source of dTMP, an essential precursor for DNA biosynthesis. The chain is Thymidylate synthase from Levilactobacillus brevis (strain ATCC 367 / BCRC 12310 / CIP 105137 / JCM 1170 / LMG 11437 / NCIMB 947 / NCTC 947) (Lactobacillus brevis).